We begin with the raw amino-acid sequence, 127 residues long: Probable 4-amino-4-deoxy-L-arabinose-phosphoundecaprenol flippase subunit ArnF (127 aa).

The Cytoplasmic segment spans residues 1-2; that stretch reads MG. Residues 3-23 form a helical membrane-spanning segment; that stretch reads LLFALGSVVLVSAAQLLLKWA. Topologically, residues 24-47 are periplasmic; the sequence is MIQLPDISQLPQFLSSLSQFPLPT. The helical transmembrane segment at 48–68 threads the bilayer; that stretch reads AALFLGLLAYALSMLCWLLAL. Topologically, residues 69-76 are cytoplasmic; that stretch reads KRLPLSRA. The helical transmembrane segment at 77–97 threads the bilayer; it reads YPLLSLSYLLVWLAALWLPGL. Topologically, residues 98-102 are periplasmic; the sequence is NEVFR. Residues 103 to 123 form a helical membrane-spanning segment; that stretch reads WGKLAGAGLIVSGLLLICWPA. At 124–127 the chain is on the cytoplasmic side; it reads AKTR.

The protein belongs to the ArnF family. As to quaternary structure, heterodimer of ArnE and ArnF.

The protein localises to the cell inner membrane. Its pathway is bacterial outer membrane biogenesis; lipopolysaccharide biosynthesis. Its function is as follows. Translocates 4-amino-4-deoxy-L-arabinose-phosphoundecaprenol (alpha-L-Ara4N-phosphoundecaprenol) from the cytoplasmic to the periplasmic side of the inner membrane. The polypeptide is Probable 4-amino-4-deoxy-L-arabinose-phosphoundecaprenol flippase subunit ArnF (Erwinia tasmaniensis (strain DSM 17950 / CFBP 7177 / CIP 109463 / NCPPB 4357 / Et1/99)).